We begin with the raw amino-acid sequence, 1916 residues long: Endoribonuclease Dicer (1916 aa).

The Helicase ATP-binding domain maps to 51-227 (LLEAALDHNT…ELEEKIQKLE (177 aa)). 64 to 71 (LNTGSGKT) contributes to the ATP binding site. The DECH box signature appears at 175 to 178 (DECH). Residues 256–595 (DCGPFTDRSG…LRNKCSKSAD (340 aa)) are required for interaction with PRKRA and TARBP2. The segment at 409 to 433 (YVSWSDSEDDDDDEEIEEKEKPETN) is disordered. Residues Ser413 and Ser415 each carry the phosphoserine modification. Over residues 414–425 (DSEDDDDDEEIE) the composition is skewed to acidic residues. In terms of domain architecture, Helicase C-terminal spans 433-602 (NFPSPFTNIL…SADGAEADVH (170 aa)). One can recognise a Dicer dsRNA-binding fold domain in the interval 630-722 (AIGHINRYCA…MPVGKETVKY (93 aa)). Positions 726–745 (LDLHDEEETSVPGRPGSTKR) are disordered. A PAZ domain is found at 895–1042 (KFMEDIEKSE…LVPELCAIHP (148 aa)). Ser1016 and Ser1160 each carry phosphoserine. Residues 1276–1403 (DSEQSPSVGY…SEKWEKDEMT (128 aa)) form the RNase III 1 domain. 3 residues coordinate Mg(2+): Glu1316, Glu1395, and Glu1398. 3 positions are modified to phosphoserine: Ser1456, Ser1464, and Ser1466. The interval 1598-1626 (ALDPAQENGSSQQKSLSGSCAAPVGPRSS) is disordered. Residues 1604 to 1615 (ENGSSQQKSLSG) are compositionally biased toward polar residues. Residues 1660 to 1818 (FETFEKKINY…LAGAIYMDSG (159 aa)) form the RNase III 2 domain. Positions 1699, 1804, and 1807 each coordinate Mg(2+). One can recognise a DRBM domain in the interval 1843–1908 (VPRSPVRELL…ARRALRSLKA (66 aa)). A Phosphoserine modification is found at Ser1862.

Belongs to the helicase family. Dicer subfamily. As to quaternary structure, component of the RISC loading complex (RLC), or micro-RNA (miRNA) loading complex (miRLC), which is composed of DICER1, AGO2 and TARBP2; DICER1 and TARBP2 are required to process precursor miRNAs (pre-miRNAs) to mature miRNAs and then load them onto AGO2. Note that the trimeric RLC/miRLC is also referred to as RISC. Interacts with DHX9, AGO1, PIWIL1 and PRKRA. Interacts with AGO2, TARBP2, EIF6, MOV10 and RPL7A (60S ribosome subunit); they form a large RNA-induced silencing complex (RISC). Interacts with BCDIN3D. Interacts (via Dicer dsRNA-binding fold domain) with ALOX5 (via PLAT domain); this interaction enhances arachidonate 5-lipoxygenase activity and modifies the miRNA precursor processing activity of DICER1. Requires Mg(2+) as cofactor. It depends on Mn(2+) as a cofactor. Isoform 1 is expressed in a wide variety of tissues. Isoform 2 is specifically expressed in oocytes during their growth (at protein level).

Its subcellular location is the cytoplasm. It catalyses the reaction Endonucleolytic cleavage to 5'-phosphomonoester.. Its function is as follows. Double-stranded RNA (dsRNA) endoribonuclease playing a central role in short dsRNA-mediated post-transcriptional gene silencing. Cleaves naturally occurring long dsRNAs and short hairpin pre-microRNAs (miRNA) into fragments of twenty-one to twenty-three nucleotides with 3' overhang of two nucleotides, producing respectively short interfering RNAs (siRNA) and mature microRNAs. SiRNAs and miRNAs serve as guide to direct the RNA-induced silencing complex (RISC) to complementary RNAs to degrade them or prevent their translation. Gene silencing mediated by siRNAs, also called RNA interference, controls the elimination of transcripts from mobile and repetitive DNA elements of the genome but also the degradation of exogenous RNA of viral origin for instance. The miRNA pathway on the other side is a mean to specifically regulate the expression of target genes. Functionally, more active than isoform 1 to process long double-stranded RNA into siRNAs. Responsible for the accumulation of endogenous siRNAs observed in mouse oocytes compared to somatic cells and it regulates meiotic spindle organization in female germline. This chain is Endoribonuclease Dicer (Dicer1), found in Mus musculus (Mouse).